Here is a 380-residue protein sequence, read N- to C-terminus: Cysteine protease ATG4A (380 aa).

Cys60 functions as the Nucleophile in the catalytic mechanism. Active-site residues include Asp262 and His264. The short motif at 375–378 is the LIR element; it reads FEIL.

Belongs to the peptidase C54 family.

It localises to the cytoplasm. It carries out the reaction [protein]-C-terminal L-amino acid-glycyl-phosphatidylethanolamide + H2O = [protein]-C-terminal L-amino acid-glycine + a 1,2-diacyl-sn-glycero-3-phosphoethanolamine. In terms of biological role, cysteine protease that plays a key role in autophagy by mediating both proteolytic activation and delipidation of ATG8 family proteins. The protease activity is required for proteolytic activation of ATG8 family proteins: cleaves the C-terminal amino acid of ATG8 proteins to reveal a C-terminal glycine. Exposure of the glycine at the C-terminus is essential for ATG8 proteins conjugation to phosphatidylethanolamine (PE) and insertion to membranes, which is necessary for autophagy. Protease activity is also required to counteract formation of high-molecular weight conjugates of ATG8 proteins (ATG8ylation): acts as a deubiquitinating-like enzyme that removes ATG8 conjugated to other proteins, such as ATG3. In addition to the protease activity, also mediates delipidation of ATG8 family proteins. Catalyzes delipidation of PE-conjugated forms of ATG8 proteins during macroautophagy. In Gallus gallus (Chicken), this protein is Cysteine protease ATG4A.